The primary structure comprises 293 residues: Hydroxyquinol 1,2-dioxygenase (293 aa).

Y164, Y197, H221, and H223 together coordinate Fe cation.

This sequence belongs to the intradiol ring-cleavage dioxygenase family. Homodimer. It depends on Fe(3+) as a cofactor.

It catalyses the reaction benzene-1,2,4-triol + O2 = maleylacetate + 2 H(+). Its pathway is aromatic compound metabolism; beta-ketoadipate pathway; 3-oxoadipate from 3,4-dihydroxybenzoate: step 2/4. With respect to regulation, inhibited by 3,5-dichlorocatechol, chlorohydroquinone and 4,5-dibromocatechol. Its function is as follows. Catalyzes the ortho-cleavage of the aromatic ring of hydroxyquinol. This is Hydroxyquinol 1,2-dioxygenase (chqB) from Nocardioides simplex (Arthrobacter simplex).